Reading from the N-terminus, the 245-residue chain is 1-(5-phosphoribosyl)-5-[(5-phosphoribosylamino)methylideneamino] imidazole-4-carboxamide isomerase (245 aa).

Asp-8 functions as the Proton acceptor in the catalytic mechanism. The Proton donor role is filled by Asp-129.

This sequence belongs to the HisA/HisF family.

It localises to the cytoplasm. The catalysed reaction is 1-(5-phospho-beta-D-ribosyl)-5-[(5-phospho-beta-D-ribosylamino)methylideneamino]imidazole-4-carboxamide = 5-[(5-phospho-1-deoxy-D-ribulos-1-ylimino)methylamino]-1-(5-phospho-beta-D-ribosyl)imidazole-4-carboxamide. It participates in amino-acid biosynthesis; L-histidine biosynthesis; L-histidine from 5-phospho-alpha-D-ribose 1-diphosphate: step 4/9. This Rhodopseudomonas palustris (strain ATCC BAA-98 / CGA009) protein is 1-(5-phosphoribosyl)-5-[(5-phosphoribosylamino)methylideneamino] imidazole-4-carboxamide isomerase.